Consider the following 445-residue polypeptide: MSFEDLGVSRWLSEALAAMKIHTPTAIQSGCIPKILSGHDCIGGAKTGSGKTIAFAAPMLTQWSEDPFGIFGLVLTPTRELALQIAEQFAALGASMNIKISVVVGGEDFVKQTLELQKKPHFVIATPGRLADHILNSGEETISGLRRIKYLVLDEADRLLSNSFGGDLERCFSVLPPSEKRQTCLFTATVTDAVRALKEKPPAQGKPPVFLHEVETVDQVAIPSTLSIKYVFVPSYVKEAYLNSILRLPQYEKSTAVIFVNRTTTAEVLRRTLRKLEFRVASLHSEMPQSERTNSVQRFKAGAARILIATDVASRGLDIPSVELVVNFDIPADPDDFIHRVGRTARAGRSGDAVTIIAEKDIDRIASIEERINKKMELLEEVTDDSVITDSLTATSVAKRESLMEMDKENFGEKRKINRKKRGLETEKIRVVKSKKEKSKKSLRQ.

Residues 1–29 (MSFEDLGVSRWLSEALAAMKIHTPTAIQS) carry the Q motif motif. The 177-residue stretch at 32-208 (IPKILSGHDC…EKPPAQGKPP (177 aa)) folds into the Helicase ATP-binding domain. Residue 45–52 (AKTGSGKT) coordinates ATP. The DEAD box motif lies at 154–157 (DEAD). The Helicase C-terminal domain occupies 247-387 (RLPQYEKSTA…LLEEVTDDSV (141 aa)). The segment at 408–445 (KENFGEKRKINRKKRGLETEKIRVVKSKKEKSKKSLRQ) is disordered. The segment covering 431–445 (VVKSKKEKSKKSLRQ) has biased composition (basic residues).

Belongs to the DEAD box helicase family. DDX49/DBP8 subfamily.

The protein localises to the nucleus. Its subcellular location is the nucleolus. It catalyses the reaction ATP + H2O = ADP + phosphate + H(+). Its function is as follows. ATP-binding RNA helicase involved in 40S ribosomal subunit biogenesis and is required for the normal formation of 18S rRNAs through pre-rRNA processing at A0, A1 and A2 sites. Required for vegetative growth. In Scheffersomyces stipitis (strain ATCC 58785 / CBS 6054 / NBRC 10063 / NRRL Y-11545) (Yeast), this protein is ATP-dependent RNA helicase DBP8 (DBP8).